The sequence spans 226 residues: Ribosome-recycling factor, mitochondrial (226 aa).

The protein belongs to the RRF family.

Its subcellular location is the mitochondrion. Necessary for protein synthesis in mitochondria. Functions as a ribosome recycling factor in mitochondria. This is Ribosome-recycling factor, mitochondrial (RRF1) from Eremothecium gossypii (strain ATCC 10895 / CBS 109.51 / FGSC 9923 / NRRL Y-1056) (Yeast).